The sequence spans 845 residues: Beta-mannosidase B (845 aa).

Residue asparagine 252 is glycosylated (N-linked (GlcNAc...) asparagine). The active-site Proton donor is the glutamate 432. N-linked (GlcNAc...) asparagine glycans are attached at residues asparagine 717 and asparagine 723.

Belongs to the glycosyl hydrolase 2 family. Beta-mannosidase B subfamily.

The enzyme catalyses Hydrolysis of terminal, non-reducing beta-D-mannose residues in beta-D-mannosides.. It functions in the pathway glycan metabolism; N-glycan degradation. Functionally, exoglycosidase that cleaves the single beta-linked mannose residue from the non-reducing end of beta-mannosidic oligosaccharides of various complexity and length. Prefers mannobiose over mannotriose and has no activity against polymeric mannan. Is also severely restricted by galactosyl substitutions at the +1 subsite. In Aspergillus fumigatus (strain CBS 144.89 / FGSC A1163 / CEA10) (Neosartorya fumigata), this protein is Beta-mannosidase B (mndB).